The sequence spans 219 residues: Thymidylate kinase (219 aa).

7 to 14 contributes to the ATP binding site; that stretch reads GIDGAGKS.

The protein belongs to the thymidylate kinase family.

The enzyme catalyses dTMP + ATP = dTDP + ADP. Functionally, phosphorylation of dTMP to form dTDP in both de novo and salvage pathways of dTTP synthesis. The protein is Thymidylate kinase of Chlorobium limicola (strain DSM 245 / NBRC 103803 / 6330).